A 1482-amino-acid polypeptide reads, in one-letter code: Chromosome partition protein MukB (1482 aa).

34 to 41 (GGNGAGKS) serves as a coordination point for ATP. Coiled-coil stretches lie at residues 337 to 418 (LNLV…QYQQ), 444 to 472 (LDTY…QTAH), 509 to 601 (RHLA…TSHA), 781 to 805 (AARE…ATLS), 835 to 1116 (EAEI…AKAG), and 1210 to 1265 (EAIE…LQSV). The flexible hinge stretch occupies residues 666 to 783 (PGGAEDARLN…SVPLFGRAAR (118 aa)). Residues 1049-1077 (ADAGAEERARQRRDELHTRLSNNRSRRNQ) form a disordered region. A compositionally biased stretch (basic and acidic residues) spans 1051 to 1066 (AGAEERARQRRDELHT).

It belongs to the SMC family. MukB subfamily. As to quaternary structure, homodimerization via its hinge domain. Binds to DNA via its C-terminal region. Interacts, and probably forms a ternary complex, with MukE and MukF via its C-terminal region. The complex formation is stimulated by calcium or magnesium. Interacts with tubulin-related protein FtsZ.

Its subcellular location is the cytoplasm. The protein resides in the nucleoid. Its function is as follows. Plays a central role in chromosome condensation, segregation and cell cycle progression. Functions as a homodimer, which is essential for chromosome partition. Involved in negative DNA supercoiling in vivo, and by this means organize and compact chromosomes. May achieve or facilitate chromosome segregation by condensation DNA from both sides of a centrally located replisome during cell division. The protein is Chromosome partition protein MukB of Cronobacter sakazakii (strain ATCC BAA-894) (Enterobacter sakazakii).